Here is a 518-residue protein sequence, read N- to C-terminus: Sensory neuron membrane protein 1 (518 aa).

Over 1–8 the chain is Cytoplasmic; sequence MKTAEKLG. The chain crosses the membrane as a helical span at residues 9-29; sequence IIGTTISIFGIGFGWGVFPWL. The Extracellular segment spans residues 30-456; the sequence is IRMQIGRVSL…ELFRILQFLD (427 aa). N-linked (GlcNAc...) asparagine glycosylation is found at N64, N186, N225, N316, N334, and N381. Intrachain disulfides connect C265-C330, C294-C349, and C332-C338. A helical transmembrane segment spans residues 457–477; sequence VIKWVITLFGAGVVSGGVGLY. The Cytoplasmic portion of the chain corresponds to 478–518; it reads YKEKNSLPITPTSSATSKKIDNPTDKTTTHELGHTNFGYIN.

The protein belongs to the CD36 family.

Its subcellular location is the cell membrane. In terms of biological role, plays an olfactory role that is not restricted to pheromone sensitivity. The chain is Sensory neuron membrane protein 1 from Pediculus humanus subsp. corporis (Body louse).